Consider the following 159-residue polypeptide: SsrA-binding protein (159 aa).

It belongs to the SmpB family.

Its subcellular location is the cytoplasm. Functionally, required for rescue of stalled ribosomes mediated by trans-translation. Binds to transfer-messenger RNA (tmRNA), required for stable association of tmRNA with ribosomes. tmRNA and SmpB together mimic tRNA shape, replacing the anticodon stem-loop with SmpB. tmRNA is encoded by the ssrA gene; the 2 termini fold to resemble tRNA(Ala) and it encodes a 'tag peptide', a short internal open reading frame. During trans-translation Ala-aminoacylated tmRNA acts like a tRNA, entering the A-site of stalled ribosomes, displacing the stalled mRNA. The ribosome then switches to translate the ORF on the tmRNA; the nascent peptide is terminated with the 'tag peptide' encoded by the tmRNA and targeted for degradation. The ribosome is freed to recommence translation, which seems to be the essential function of trans-translation. The sequence is that of SsrA-binding protein from Acidothermus cellulolyticus (strain ATCC 43068 / DSM 8971 / 11B).